A 417-amino-acid polypeptide reads, in one-letter code: Gamma-glutamyl phosphate reductase (417 aa).

Belongs to the gamma-glutamyl phosphate reductase family.

The protein localises to the cytoplasm. The catalysed reaction is L-glutamate 5-semialdehyde + phosphate + NADP(+) = L-glutamyl 5-phosphate + NADPH + H(+). Its pathway is amino-acid biosynthesis; L-proline biosynthesis; L-glutamate 5-semialdehyde from L-glutamate: step 2/2. Its function is as follows. Catalyzes the NADPH-dependent reduction of L-glutamate 5-phosphate into L-glutamate 5-semialdehyde and phosphate. The product spontaneously undergoes cyclization to form 1-pyrroline-5-carboxylate. This chain is Gamma-glutamyl phosphate reductase, found in Bacteroides thetaiotaomicron (strain ATCC 29148 / DSM 2079 / JCM 5827 / CCUG 10774 / NCTC 10582 / VPI-5482 / E50).